A 376-amino-acid chain; its full sequence is Guanine nucleotide-binding protein G(s) subunit alpha (376 aa).

A lipid anchor (N-palmitoyl glycine) is attached at Gly-2. The S-palmitoyl cysteine moiety is linked to residue Cys-3. Residues 36 to 376 (GTHRLLLLGA…RMHLRQYELL (341 aa)) enclose the G-alpha domain. The tract at residues 39 to 52 (RLLLLGAGESGKST) is G1 motif. GTP is bound by residues 44–51 (GAGESGKS), 180–186 (LRCRVLT), 205–209 (DVGGQ), 274–277 (NKQD), and Ala-348. 2 residues coordinate Mg(2+): Ser-51 and Thr-186. Residues 178 to 186 (DILRCRVLT) are G2 motif. Residues 201 to 210 (FHMFDVGGQR) are G3 motif. The interval 270–277 (ILFLNKQD) is G4 motif. A G5 motif region spans residues 346 to 351 (TCAVDT).

The protein belongs to the G-alpha family. G(s) subfamily. In terms of assembly, g proteins are composed of 3 units; alpha, beta and gamma. The alpha chain contains the guanine nucleotide binding site.

In terms of biological role, guanine nucleotide-binding proteins (G proteins) are involved as modulators or transducers in various transmembrane signaling systems. The G(s) protein is involved in hormonal regulation of adenylate cyclase: it activates the cyclase in response to beta-adrenergic stimuli. This Lymnaea stagnalis (Great pond snail) protein is Guanine nucleotide-binding protein G(s) subunit alpha.